The following is a 75-amino-acid chain: Tautomerase PptA (75 aa).

Residue Pro2 is the Proton acceptor; via imino nitrogen of the active site.

The protein belongs to the 4-oxalocrotonate tautomerase family. PptA subfamily. As to quaternary structure, homodimer.

Its subcellular location is the cytoplasm. The sequence is that of Tautomerase PptA from Escherichia coli O139:H28 (strain E24377A / ETEC).